The following is a 193-amino-acid chain: Holliday junction branch migration complex subunit RuvA (193 aa).

The interval M1–G64 is domain I. The domain II stretch occupies residues T65–M139. The flexible linker stretch occupies residues M139–A143. The interval S144–G193 is domain III.

This sequence belongs to the RuvA family. In terms of assembly, homotetramer. Forms an RuvA(8)-RuvB(12)-Holliday junction (HJ) complex. HJ DNA is sandwiched between 2 RuvA tetramers; dsDNA enters through RuvA and exits via RuvB. An RuvB hexamer assembles on each DNA strand where it exits the tetramer. Each RuvB hexamer is contacted by two RuvA subunits (via domain III) on 2 adjacent RuvB subunits; this complex drives branch migration. In the full resolvosome a probable DNA-RuvA(4)-RuvB(12)-RuvC(2) complex forms which resolves the HJ.

It is found in the cytoplasm. The RuvA-RuvB-RuvC complex processes Holliday junction (HJ) DNA during genetic recombination and DNA repair, while the RuvA-RuvB complex plays an important role in the rescue of blocked DNA replication forks via replication fork reversal (RFR). RuvA specifically binds to HJ cruciform DNA, conferring on it an open structure. The RuvB hexamer acts as an ATP-dependent pump, pulling dsDNA into and through the RuvAB complex. HJ branch migration allows RuvC to scan DNA until it finds its consensus sequence, where it cleaves and resolves the cruciform DNA. The sequence is that of Holliday junction branch migration complex subunit RuvA from Paraburkholderia phytofirmans (strain DSM 17436 / LMG 22146 / PsJN) (Burkholderia phytofirmans).